The primary structure comprises 91 residues: MKRVRAHLRIYGRVQGVGFRWSMSREARKLGVHGWVRNLPDGTVEAVIEGDPERVEALIGWAHQGPPLARVTRVEVKWEEPEGLEGFKVVG.

An Acylphosphatase-like domain is found at 5 to 91 (RAHLRIYGRV…EGLEGFKVVG (87 aa)). Residues arginine 20 and asparagine 38 contribute to the active site.

The protein belongs to the acylphosphatase family.

The catalysed reaction is an acyl phosphate + H2O = a carboxylate + phosphate + H(+). The sequence is that of Acylphosphatase (acyP) from Thermococcus kodakarensis (strain ATCC BAA-918 / JCM 12380 / KOD1) (Pyrococcus kodakaraensis (strain KOD1)).